Consider the following 453-residue polypeptide: Bestrophin homolog 5 (453 aa).

Helical transmembrane passes span 78 to 98, 113 to 133, 275 to 295, and 314 to 334; these read ELIV…FALT, DARM…NIII, IPLM…FLCI, and LYIP…LKVA.

It belongs to the anion channel-forming bestrophin (TC 1.A.46) family. Calcium-sensitive chloride channel subfamily. In terms of assembly, forms oligomers.

Its subcellular location is the cell membrane. Its function is as follows. Forms chloride channels. This chain is Bestrophin homolog 5 (best-5), found in Caenorhabditis elegans.